We begin with the raw amino-acid sequence, 537 residues long: Eukaryotic translation initiation factor 3 subunit L (537 aa).

The PCI domain occupies T300–H512.

Belongs to the eIF-3 subunit L family. In terms of assembly, component of the eukaryotic translation initiation factor 3 (eIF-3) complex.

The protein localises to the cytoplasm. Its function is as follows. Component of the eukaryotic translation initiation factor 3 (eIF-3) complex, which is involved in protein synthesis of a specialized repertoire of mRNAs and, together with other initiation factors, stimulates binding of mRNA and methionyl-tRNAi to the 40S ribosome. The eIF-3 complex specifically targets and initiates translation of a subset of mRNAs involved in cell proliferation. The protein is Eukaryotic translation initiation factor 3 subunit L of Culex quinquefasciatus (Southern house mosquito).